The chain runs to 102 residues: MNKPLIRTERNGDWLRFGVKVQPRSSRNQIVGEHEGDLKIKVMAPPVEGAANQALQKFLAELFKLPKKDIRIVRGETSRHKIVEIRGIEAEKLLAFIPQITK.

It belongs to the UPF0235 family.

The polypeptide is UPF0235 protein Swol_0959 (Syntrophomonas wolfei subsp. wolfei (strain DSM 2245B / Goettingen)).